The primary structure comprises 334 residues: tRNA methyltransferase 10 homolog A (334 aa).

Disordered stretches follow at residues 1–101 (MSLE…SRKR) and 290–334 (PLTE…EQNS). The span at 26 to 40 (HAGNNTPLQENSSAP) shows a compositional bias: polar residues. Residues 62-94 (KQWEDQRELRKQKRKEKRQKRKLERQAQAEHNI) are a coiled coil. Basic residues predominate over residues 71–84 (RKQKRKEKRQKRKL). Over residues 85–98 (ERQAQAEHNIDANS) the composition is skewed to basic and acidic residues. Residues 98–289 (SRKRFRHEVQ…SVLPQRKGAI (192 aa)) form the SAM-dependent MTase TRM10-type domain. Acidic residues predominate over residues 305–317 (QEDGEDSDSDSSI).

It belongs to the class IV-like SAM-binding methyltransferase superfamily. TRM10 family.

It carries out the reaction guanosine(9) in tRNA + S-adenosyl-L-methionine = N(1)-methylguanosine(9) in tRNA + S-adenosyl-L-homocysteine + H(+). Its function is as follows. S-adenosyl-L-methionine-dependent guanine N(1)-methyltransferase that catalyzes the formation of N(1)-methylguanine at position 9 (m1G9) in tRNAs. Probably not able to catalyze formation of N(1)-methyladenine at position 9 (m1A9) in tRNAs. The polypeptide is tRNA methyltransferase 10 homolog A (trmt10a) (Xenopus tropicalis (Western clawed frog)).